Consider the following 310-residue polypeptide: Putative S-adenosyl-L-methionine-dependent methyltransferase MUL_4762 (310 aa).

Residues D132 and 161–162 (DL) contribute to the S-adenosyl-L-methionine site.

The protein belongs to the UPF0677 family.

Functionally, exhibits S-adenosyl-L-methionine-dependent methyltransferase activity. In Mycobacterium ulcerans (strain Agy99), this protein is Putative S-adenosyl-L-methionine-dependent methyltransferase MUL_4762.